The sequence spans 747 residues: Myotubularin-related protein 12 (747 aa).

Residues 205 to 643 (FDTPKDWCWE…PEIKVWAQRY (439 aa)) enclose the Myotubularin phosphatase domain. Positions 449–558 (VPIFLLFLDC…RGQQKGSRFK (110 aa)) are interaction with MTM1. The tract at residues 548 to 575 (DRGQQKGSRFKHQRQLSLPLTQSKSSPK) is disordered. Residues 562–572 (QLSLPLTQSKS) are compositionally biased toward polar residues. 2 positions are modified to phosphoserine: serine 564 and serine 601.

It belongs to the protein-tyrosine phosphatase family. Non-receptor class myotubularin subfamily. Heterodimer with lipid phosphatase MTM1. Heterodimer with lipid phosphatase MTMR2. In terms of tissue distribution, expressed in skeletal muscles (at protein level).

It localises to the cytoplasm. Its subcellular location is the sarcoplasmic reticulum. The protein localises to the myofibril. The protein resides in the sarcomere. Acts as an adapter for the myotubularin-related phosphatases. Regulates phosphatase MTM1 protein stability and possibly its intracellular location. By stabilizing MTM1 protein levels, required for skeletal muscle maintenance but not for myogenesis. The chain is Myotubularin-related protein 12 (Mtmr12) from Mus musculus (Mouse).